We begin with the raw amino-acid sequence, 139 residues long: Small ribosomal subunit protein uS11A (139 aa).

The tract at residues 119-139 (DVTPIPTDSTRRKGGRRGRRL) is disordered. Basic residues predominate over residues 130–139 (RKGGRRGRRL).

The protein belongs to the universal ribosomal protein uS11 family. In terms of assembly, component of the small ribosomal subunit (SSU). Mature yeast ribosomes consist of a small (40S) and a large (60S) subunit. The 40S small subunit contains 1 molecule of ribosomal RNA (18S rRNA) and at least 33 different proteins. The large 60S subunit contains 3 rRNA molecules (25S, 5.8S and 5S rRNA) and at least 46 different proteins. uS11 interacts with eS1 forming part of the mRNA exit tunnel. uS11 interacts with snoRNA U3. uS11 interacts with MPP10. Component of the ribosomal small subunit (SSU) processome composed of at least 40 protein subunits and snoRNA U3.

The protein localises to the cytoplasm. It localises to the nucleus. Its subcellular location is the nucleolus. Its function is as follows. Component of the ribosome, a large ribonucleoprotein complex responsible for the synthesis of proteins in the cell. The small ribosomal subunit (SSU) binds messenger RNAs (mRNAs) and translates the encoded message by selecting cognate aminoacyl-transfer RNA (tRNA) molecules. The large subunit (LSU) contains the ribosomal catalytic site termed the peptidyl transferase center (PTC), which catalyzes the formation of peptide bonds, thereby polymerizing the amino acids delivered by tRNAs into a polypeptide chain. The nascent polypeptides leave the ribosome through a tunnel in the LSU and interact with protein factors that function in enzymatic processing, targeting, and the membrane insertion of nascent chains at the exit of the ribosomal tunnel. uS11 is involved in nucleolar processing of pre-18S ribosomal RNA and ribosome assembly. The polypeptide is Small ribosomal subunit protein uS11A (rps1401) (Schizosaccharomyces pombe (strain 972 / ATCC 24843) (Fission yeast)).